The chain runs to 383 residues: Putative glutamate--cysteine ligase 2-2 (383 aa).

Belongs to the glutamate--cysteine ligase type 2 family. YbdK subfamily.

The enzyme catalyses L-cysteine + L-glutamate + ATP = gamma-L-glutamyl-L-cysteine + ADP + phosphate + H(+). ATP-dependent carboxylate-amine ligase which exhibits weak glutamate--cysteine ligase activity. The protein is Putative glutamate--cysteine ligase 2-2 of Legionella pneumophila (strain Lens).